The primary structure comprises 312 residues: Nodulation protein D 2 (312 aa).

One can recognise an HTH lysR-type domain in the interval 6-63 (LDLNLLVALDALMTKRSVTAAARSINLSQPAMSAAIARLRTYFGDDLFTMRGRELIPT). Residues 23-42 (VTAAARSINLSQPAMSAAIA) constitute a DNA-binding region (H-T-H motif).

This sequence belongs to the LysR transcriptional regulatory family.

In terms of biological role, represses the expression of the nodABCIJ-nolO-noeI operon. The sequence is that of Nodulation protein D 2 (nodD2) from Sinorhizobium fredii (strain NBRC 101917 / NGR234).